Reading from the N-terminus, the 349-residue chain is Anthranilate phosphoribosyltransferase (349 aa).

Residues glycine 82, 85-86 (GD), 92-95 (NVST), 110-118 (KHGNRGVSS), and serine 122 each bind 5-phospho-alpha-D-ribose 1-diphosphate. Glycine 82 contacts anthranilate. Serine 94 is a Mg(2+) binding site. Asparagine 113 provides a ligand contact to anthranilate. Arginine 168 is a binding site for anthranilate. Residues aspartate 227 and glutamate 228 each contribute to the Mg(2+) site.

It belongs to the anthranilate phosphoribosyltransferase family. In terms of assembly, homodimer. Mg(2+) serves as cofactor.

The enzyme catalyses N-(5-phospho-beta-D-ribosyl)anthranilate + diphosphate = 5-phospho-alpha-D-ribose 1-diphosphate + anthranilate. It participates in amino-acid biosynthesis; L-tryptophan biosynthesis; L-tryptophan from chorismate: step 2/5. Catalyzes the transfer of the phosphoribosyl group of 5-phosphorylribose-1-pyrophosphate (PRPP) to anthranilate to yield N-(5'-phosphoribosyl)-anthranilate (PRA). In Acinetobacter baumannii (strain ATCC 17978 / DSM 105126 / CIP 53.77 / LMG 1025 / NCDC KC755 / 5377), this protein is Anthranilate phosphoribosyltransferase.